The primary structure comprises 347 residues: NADH-ubiquinone oxidoreductase chain 2 (347 aa).

11 consecutive transmembrane segments (helical) span residues 3-23, 25-45, 59-79, 96-116, 122-142, 149-169, 178-198, 201-221, 237-257, 274-294, and 325-345; these read PPIF…VMTS, HWML…PILM, YFLT…INLL, ILMT…FWVP, IPLS…LSVL, INPN…GWGG, ILAY…LYNP, MILN…LFML, MPLI…LPPL, EMII…YFYM, and FLPP…MISI.

This sequence belongs to the complex I subunit 2 family. As to quaternary structure, core subunit of respiratory chain NADH dehydrogenase (Complex I) which is composed of 45 different subunits. Interacts with TMEM242.

The protein localises to the mitochondrion inner membrane. It carries out the reaction a ubiquinone + NADH + 5 H(+)(in) = a ubiquinol + NAD(+) + 4 H(+)(out). Core subunit of the mitochondrial membrane respiratory chain NADH dehydrogenase (Complex I) which catalyzes electron transfer from NADH through the respiratory chain, using ubiquinone as an electron acceptor. Essential for the catalytic activity and assembly of complex I. The chain is NADH-ubiquinone oxidoreductase chain 2 from Genetta servalina (Servaline genet).